The following is a 204-amino-acid chain: Ribonuclease HII (204 aa).

Residues 1 to 197 (MILGIDEAGR…KNRILNPKLL (197 aa)) form the RNase H type-2 domain. A divalent metal cation-binding residues include Asp-6, Glu-7, and Asp-103.

This sequence belongs to the RNase HII family. The cofactor is Mn(2+). Mg(2+) is required as a cofactor.

The protein localises to the cytoplasm. The catalysed reaction is Endonucleolytic cleavage to 5'-phosphomonoester.. In terms of biological role, endonuclease that specifically degrades the RNA of RNA-DNA hybrids. The chain is Ribonuclease HII from Helicobacter pylori (strain Shi470).